Reading from the N-terminus, the 624-residue chain is Coagulation factor XI (624 aa).

The N-terminal stretch at 1–18 (MTSLHQVLYFIFFASVSS) is a signal peptide. 4 consecutive Apple domains span residues 20-103 (CVTK…FKQC), 110-193 (CSKD…LKSC), 200-283 (CIRD…LQHC), and 291-376 (CHPS…LRLC). Disulfide bonds link Cys-20–Cys-103, Cys-46–Cys-76, Cys-50–Cys-56, Cys-110–Cys-193, Cys-136–Cys-165, Cys-140–Cys-146, Cys-200–Cys-283, Cys-226–Cys-255, Cys-230–Cys-236, Cys-291–Cys-376, Cys-317–Cys-348, Cys-321–Cys-327, Cys-382–Cys-499, Cys-415–Cys-431, Cys-513–Cys-580, Cys-544–Cys-559, and Cys-570–Cys-598. N-linked (GlcNAc...) asparagine glycans are attached at residues Asn-90 and Asn-126. Residue Asn-297 is glycosylated (N-linked (GlcNAc...) asparagine). In terms of domain architecture, Peptidase S1 spans 390–622 (VVGGAASVHG…YVDWILEKTQ (233 aa)). His-430 acts as the Charge relay system in catalysis. N-linked (GlcNAc...) asparagine glycosylation occurs at Asn-449. Catalysis depends on Asp-479, which acts as the Charge relay system. An N-linked (GlcNAc...) asparagine glycan is attached at Asn-490. Residue 547 to 550 (RYRR) coordinates heparin. Ser-574 functions as the Charge relay system in the catalytic mechanism.

The protein belongs to the peptidase S1 family. Plasma kallikrein subfamily. Homodimer; disulfide-linked. After activation the heavy and light chains are also linked by a disulfide bond. Interacts (activated) with F9 (inactive and activated) in calcium-dependent manner. Forms a heterodimer with SERPINA5. Activated by factor XIIa (or XII), which cleaves each polypeptide after Arg-389 into the light chain, which contains the active site, and the heavy chain, which associates with high molecular weight (HMW) kininogen. Activated by F12 (activated); the presence of negatively charged surfaces accelerates activation. Activated by F2 (thrombin); the presence of negatively charged surfaces, such as polyphosphate and dextran sulfate, strongly accelerates activation. Autoactivated; the presence of negatively charged surfaces, such as polyphosphate and dextran sulfate, accelerates autoactivation and autolysis. In terms of processing, N-glycosylated on both chains. N-glycosylated sites mainly consist of nonfucosylated sialylated biantennary (in high abundance) and/or triantennary (in low abundance) complex structures.

Its subcellular location is the secreted. It catalyses the reaction Selective cleavage of Arg-|-Ala and Arg-|-Val bonds in factor IX to form factor IXa.. Inhibited by SERPINA5. Its function is as follows. Factor XI triggers the middle phase of the intrinsic pathway of blood coagulation by activating factor IX. The sequence is that of Coagulation factor XI (F11) from Mus musculus (Mouse).